A 183-amino-acid chain; its full sequence is Endoribonuclease YbeY (183 aa).

Positions 118, 122, and 128 each coordinate Zn(2+). The segment at 156 to 183 is disordered; sequence EREQAQRSADSAVLGAVGLEEQDGPGTH.

It belongs to the endoribonuclease YbeY family. It depends on Zn(2+) as a cofactor.

The protein resides in the cytoplasm. Single strand-specific metallo-endoribonuclease involved in late-stage 70S ribosome quality control and in maturation of the 3' terminus of the 16S rRNA. The sequence is that of Endoribonuclease YbeY from Saccharopolyspora erythraea (strain ATCC 11635 / DSM 40517 / JCM 4748 / NBRC 13426 / NCIMB 8594 / NRRL 2338).